The sequence spans 290 residues: Ribosomal RNA small subunit methyltransferase A (290 aa).

Asn27, Leu29, Gly54, Glu75, Asp100, and Asn125 together coordinate S-adenosyl-L-methionine.

Belongs to the class I-like SAM-binding methyltransferase superfamily. rRNA adenine N(6)-methyltransferase family. RsmA subfamily.

The protein resides in the cytoplasm. The catalysed reaction is adenosine(1518)/adenosine(1519) in 16S rRNA + 4 S-adenosyl-L-methionine = N(6)-dimethyladenosine(1518)/N(6)-dimethyladenosine(1519) in 16S rRNA + 4 S-adenosyl-L-homocysteine + 4 H(+). Specifically dimethylates two adjacent adenosines (A1518 and A1519) in the loop of a conserved hairpin near the 3'-end of 16S rRNA in the 30S particle. May play a critical role in biogenesis of 30S subunits. This chain is Ribosomal RNA small subunit methyltransferase A, found in Streptococcus pyogenes serotype M3 (strain ATCC BAA-595 / MGAS315).